The sequence spans 252 residues: 2-succinyl-6-hydroxy-2,4-cyclohexadiene-1-carboxylate synthase (252 aa).

The protein belongs to the AB hydrolase superfamily. MenH family. Monomer.

It carries out the reaction 5-enolpyruvoyl-6-hydroxy-2-succinyl-cyclohex-3-ene-1-carboxylate = (1R,6R)-6-hydroxy-2-succinyl-cyclohexa-2,4-diene-1-carboxylate + pyruvate. The protein operates within quinol/quinone metabolism; 1,4-dihydroxy-2-naphthoate biosynthesis; 1,4-dihydroxy-2-naphthoate from chorismate: step 3/7. Its pathway is quinol/quinone metabolism; menaquinone biosynthesis. In terms of biological role, catalyzes a proton abstraction reaction that results in 2,5-elimination of pyruvate from 2-succinyl-5-enolpyruvyl-6-hydroxy-3-cyclohexene-1-carboxylate (SEPHCHC) and the formation of 2-succinyl-6-hydroxy-2,4-cyclohexadiene-1-carboxylate (SHCHC). This Salmonella enteritidis PT4 (strain P125109) protein is 2-succinyl-6-hydroxy-2,4-cyclohexadiene-1-carboxylate synthase.